The primary structure comprises 276 residues: Extracellular metalloprotease VDBG_07883 (276 aa).

The first 17 residues, 1 to 17, serve as a signal peptide directing secretion; it reads MQSKFLWIAAASAATAA. N-linked (GlcNAc...) asparagine glycosylation is found at Asn70 and Asn102. His191 lines the Zn(2+) pocket. Residue Glu192 is part of the active site. His195 is a Zn(2+) binding site. A glycan (N-linked (GlcNAc...) asparagine) is linked at Asn222. Cys227 and Cys254 are oxidised to a cystine.

This sequence belongs to the peptidase M43B family.

The protein resides in the secreted. Its function is as follows. Secreted metalloproteinase that allows assimilation of proteinaceous substrates. The polypeptide is Extracellular metalloprotease VDBG_07883 (Verticillium alfalfae (strain VaMs.102 / ATCC MYA-4576 / FGSC 10136) (Verticillium wilt of alfalfa)).